A 327-amino-acid polypeptide reads, in one-letter code: Biotin synthase (327 aa).

The region spanning 49–275 is the Radical SAM core domain; sequence RFGREVSLCS…VNPHAEVRMA (227 aa). [4Fe-4S] cluster-binding residues include C67, C71, and C74. Residues S112, C143, C203, and R273 each contribute to the [2Fe-2S] cluster site.

Belongs to the radical SAM superfamily. Biotin synthase family. In terms of assembly, homodimer. Requires [4Fe-4S] cluster as cofactor. The cofactor is [2Fe-2S] cluster.

It catalyses the reaction (4R,5S)-dethiobiotin + (sulfur carrier)-SH + 2 reduced [2Fe-2S]-[ferredoxin] + 2 S-adenosyl-L-methionine = (sulfur carrier)-H + biotin + 2 5'-deoxyadenosine + 2 L-methionine + 2 oxidized [2Fe-2S]-[ferredoxin]. It functions in the pathway cofactor biosynthesis; biotin biosynthesis; biotin from 7,8-diaminononanoate: step 2/2. Functionally, catalyzes the conversion of dethiobiotin (DTB) to biotin by the insertion of a sulfur atom into dethiobiotin via a radical-based mechanism. This Maridesulfovibrio salexigens (strain ATCC 14822 / DSM 2638 / NCIMB 8403 / VKM B-1763) (Desulfovibrio salexigens) protein is Biotin synthase.